A 262-amino-acid polypeptide reads, in one-letter code: Putative protein-methionine-sulfoxide reductase subunit YedZ1 (262 aa).

The protein belongs to the MsrP family.

Its function is as follows. Part of the YedY1-YedZ1 system that may repair oxidized proteins containing methionine sulfoxide residues (Met-O). This is Putative protein-methionine-sulfoxide reductase subunit YedZ1 from Azospira oryzae (strain ATCC BAA-33 / DSM 13638 / PS) (Dechlorosoma suillum).